The following is a 515-amino-acid chain: MSTIIAAPGRVSLDDLARVYAGATLELDPSYWPDVEAAAAIVAKAAQGAEPVYGINTGFGKLASKRIPPDQTAQLQRNLILSHCCGVGPVTPEAVVRLMMALKIISLGRGASGVRREIIEQLQAMLARGVCPFVPQQGSVGASGDLAPLAHMTAVMIGEGQAFVDGRLVPGREALAHAGLAPVTLGPKEGLALINGTQFSTAYALAGLLRAHDLLKAALVTGALSVDAAMASTAPFRPEIQALRGHPGQIAAGRVLTELLDGSAIRLSHLEGDERVQDPYCLRCQPQVAGAALDLLTQTARTLVTEANAVTDNPLVLVVTGEIISGGNFHAEPVAFAADQIALALSELGAISERRIATLVDPALNFGLPPFLTPQPGLNSGFMIAEVTAAALFAENKQRALPCSIDSTPTSANQEDHVSMAAHAARRLHDMADNLAHIIGIELLVAAQGIELRVPHGTSAALSAVIGALRVHVPALENDRYMADDLAKAAAIVAGGVLADAARDALGRDPFPKLG.

The 5-imidazolinone (Ala-Gly) cross-link spans alanine 142 to glycine 144. A 2,3-didehydroalanine (Ser) modification is found at serine 143.

It belongs to the PAL/histidase family. Post-translationally, contains an active site 4-methylidene-imidazol-5-one (MIO), which is formed autocatalytically by cyclization and dehydration of residues Ala-Ser-Gly.

The protein localises to the cytoplasm. It carries out the reaction L-histidine = trans-urocanate + NH4(+). Its pathway is amino-acid degradation; L-histidine degradation into L-glutamate; N-formimidoyl-L-glutamate from L-histidine: step 1/3. The polypeptide is Histidine ammonia-lyase (Bradyrhizobium sp. (strain BTAi1 / ATCC BAA-1182)).